The following is a 419-amino-acid chain: MNQEDNTGGGGIFGLFKWTKDALFGTDISPSMKYKDQEERRDRSRYAQDDTNFSMKFGNDSNRRSTNLSRSNSWSGLDSTLHRKYELLPEYNENGFNSIVNGDHHSKERIRSLRSPAPIVPREPLRNEPTDTFGHRLHTKRRTINELSNSQIPFIPPQEDDPLLSKFFNKDGVNEVRRSPYKLSVKDIPGKFPSPLTKRDEIDNYYVRDEDACHKNREYKKAYFDLFAQMDLNSRDLEDLCEDVREQREQFHRNEQTYKQAYEEMRAELVNELKKSKTLFENYYSLGQKYKSLKKVLDQTISHEAELATSRERLYQEEDLKNFEIQTLKQRLSDLELKYTNLQIEKDMQRDNYESEIHDLLLQLSLRNNERKDTSAGSNIFSTGQYDRTPFHNGNNSYDSNSHSWDTDYLKNIDGFIER.

At Ser29 the chain carries Phosphoserine. Residues 34-48 (YKDQEERRDRSRYAQ) are compositionally biased toward basic and acidic residues. A disordered region spans residues 34–76 (YKDQEERRDRSRYAQDDTNFSMKFGNDSNRRSTNLSRSNSWSG). Residues 64-75 (RSTNLSRSNSWS) show a composition bias toward low complexity. Ser73 and Ser115 each carry phosphoserine. Residues 229–355 (QMDLNSRDLE…KDMQRDNYES (127 aa)) adopt a coiled-coil conformation.

It belongs to the BBP1 family. In terms of assembly, homodimer. Interacts with KAR1, MPS2 and SPC29.

It is found in the cytoplasm. Its subcellular location is the cytoskeleton. It localises to the microtubule organizing center. The protein resides in the spindle pole body. Component of the spindle pole body (SPB) required for insertion of the nascent SPB into the nuclear envelope and for the proper execution of spindle pole body (SPB) duplication. Connects the central plaque of the SPB with the half-bridge. Required for proper localization of CDC5 at the SPB and for proper M-phase progression. The protein is Spindle pole component BBP1 (BBP1) of Saccharomyces cerevisiae (strain YJM789) (Baker's yeast).